Here is a 502-residue protein sequence, read N- to C-terminus: Cyclin-dependent kinase 19 (502 aa).

Methionine 1 bears the N-acetylmethionine mark. Positions 21 to 335 constitute a Protein kinase domain; it reads EYEGCKVGRG…SEQALQDPYF (315 aa). ATP contacts are provided by residues 27 to 35 and lysine 52; that span reads VGRGTYGHV. Aspartate 151 functions as the Proton acceptor in the catalytic mechanism. Residues 359–502 form a disordered region; the sequence is LNEDDPEEKG…YHPSHQAHRY (144 aa). Residues 371–392 are compositionally biased toward low complexity; sequence NQQQQQNQHQQPTAPPQQAAAP. Positions 408 to 421 are enriched in gly residues; sequence TAGGAGAGVGGTGA. Over residues 424–435 the composition is skewed to polar residues; it reads QHSQDSSLNQVP. The residue at position 449 (serine 449) is a Phosphoserine. The span at 458-467 shows a compositional bias: polar residues; sequence YQHSSSRLNY. Positions 468-496 are enriched in low complexity; it reads QSSVQGSSQSQSTLGYSSSSQQSSQYHPS.

This sequence belongs to the protein kinase superfamily. CMGC Ser/Thr protein kinase family. CDC2/CDKX subfamily.

Its subcellular location is the cytoplasm. It is found in the perinuclear region. The protein localises to the nucleus. It catalyses the reaction L-seryl-[protein] + ATP = O-phospho-L-seryl-[protein] + ADP + H(+). It carries out the reaction L-threonyl-[protein] + ATP = O-phospho-L-threonyl-[protein] + ADP + H(+). This chain is Cyclin-dependent kinase 19 (CDK19), found in Homo sapiens (Human).